Reading from the N-terminus, the 213-residue chain is MNRHRPHSHRSKPASTQDQPDSVRRYRDPRFDAIAVKVFPGEHYVTSNPDEMLVTILGSCVAACIRDPLAKVGGMNHFMLPEAGGSGWDTASDSMRYGNVAMERLINDILVRGGMRQRLEIKVFGGGNVMKSTANIGHRNADFVEEYLAAESLPIAARHLRGHLPRRVHYFPITGRVMLLELARTEQEAVVRLERDYKSKIQVEPVAGSAELF.

The segment covering methionine 1–lysine 12 has biased composition (basic residues). Residues methionine 1 to arginine 25 are disordered.

This sequence belongs to the CheD family.

It carries out the reaction L-glutaminyl-[protein] + H2O = L-glutamyl-[protein] + NH4(+). In terms of biological role, probably deamidates glutamine residues to glutamate on methyl-accepting chemotaxis receptors (MCPs), playing an important role in chemotaxis. The polypeptide is Probable chemoreceptor glutamine deamidase CheD (Rhodopseudomonas palustris (strain BisA53)).